Consider the following 319-residue polypeptide: Ribosomal RNA large subunit methyltransferase F (319 aa).

It belongs to the methyltransferase superfamily. METTL16/RlmF family.

Its subcellular location is the cytoplasm. It carries out the reaction adenosine(1618) in 23S rRNA + S-adenosyl-L-methionine = N(6)-methyladenosine(1618) in 23S rRNA + S-adenosyl-L-homocysteine + H(+). Its function is as follows. Specifically methylates the adenine in position 1618 of 23S rRNA. The protein is Ribosomal RNA large subunit methyltransferase F of Aliivibrio fischeri (strain ATCC 700601 / ES114) (Vibrio fischeri).